Consider the following 224-residue polypeptide: MAVTFSDLHTEEGVKSVEEHLAGKTYISGDQLSVDDVKVYAAVPVKPSDAFPNASKWYESVASQLAKSFPGKAVGVQFGGSAAAAPAVEAEAPAAAADDDDDMDLFGDETEEEKKAAEEREAAKKDTKKPKESGKSSVLMDVKPWDDETDMKKLEEAVRGVEMPGLFWGASKLVPVGYGIKKLTIMFTIVDDLVSPDNLIEDFLTSEPNNEYIQSCDIVAFNKI.

At Ala-2 the chain carries N-acetylalanine. Positions 14 to 65 (VKSVEEHLAGKTYISGDQLSVDDVKVYAAVPVKPSDAFPNASKWYESVASQL) constitute a GST C-terminal domain. The disordered stretch occupies residues 89 to 139 (EAEAPAAAADDDDDMDLFGDETEEEKKAAEEREAAKKDTKKPKESGKSSVL). Residues 97–111 (ADDDDDMDLFGDETE) are compositionally biased toward acidic residues. A compositionally biased stretch (basic and acidic residues) spans 112–134 (EEKKAAEEREAAKKDTKKPKESG).

This sequence belongs to the EF-1-beta/EF-1-delta family. In terms of assembly, EF-1 is composed of 4 subunits: alpha, beta (1B-alpha=beta'), delta (1B-beta), and gamma (1B-gamma).

Its function is as follows. EF-1-beta and EF-1-delta stimulate the exchange of GDP bound to EF-1-alpha to GTP. This is Elongation factor 1-beta 2 from Arabidopsis thaliana (Mouse-ear cress).